The primary structure comprises 91 residues: Uteroglobin (91 aa).

The signal sequence occupies residues 1 to 21; that stretch reads MKLAITLALVTLALLCSPASA.

The protein belongs to the secretoglobin family. As to quaternary structure, antiparallel homodimer; disulfide-linked. Interaction with LMBR1L is controversial. Synthesized in the uterus and lung.

The protein resides in the secreted. Its function is as follows. Uteroglobin binds progesterone specifically and with high affinity. It may regulate progesterone concentrations reaching the blastocyst. It is also a potent inhibitor of phospholipase A2. The chain is Uteroglobin (SCGB1A1) from Oryctolagus cuniculus (Rabbit).